A 278-amino-acid chain; its full sequence is TATA box-binding protein-associated factor RNA polymerase I subunit D (278 aa).

Disordered stretches follow at residues 19 to 71 (LANR…SSFE) and 88 to 115 (KKRYKKKKKKRYQPTGRPRGRPEGRRNP). Ser-23 bears the Phosphoserine mark. 2 stretches are compositionally biased toward basic residues: residues 43-53 (REKRNPIRKFV) and 88-99 (KKRYKKKKKKRY). Phosphoserine occurs at positions 138 and 234.

As to quaternary structure, component of the transcription factor SL1/TIF-IB complex, composed of TBP and at least TAF1A, TAF1B, TAF1C and TAF1D. Interacts with UBTF.

It localises to the nucleus. In terms of biological role, component of the transcription factor SL1/TIF-IB complex, which is involved in the assembly of the PIC (preinitiation complex) during RNA polymerase I-dependent transcription. The rate of PIC formation probably is primarily dependent on the rate of association of SL1/TIF-IB with the rDNA promoter. SL1/TIF-IB is involved in stabilization of nucleolar transcription factor 1/UBTF on rDNA. Formation of SL1/TIF-IB excludes the association of TBP with TFIID subunits. The polypeptide is TATA box-binding protein-associated factor RNA polymerase I subunit D (TAF1D) (Pongo abelii (Sumatran orangutan)).